Here is a 203-residue protein sequence, read N- to C-terminus: MPYIPMPYVVEQTHRGERSYDIYSRLLKDRIIFLGTPVDDDVANVIIAQLLFLESEDPDKDINLYINSPGGSVTSGLAIYDTMQYVKPQVSTICLGQAASMGAFLLAGGAAGKRFAVPNARIMIHQLSGGFQGQATDIEIQAKEALRLKAKLNEIMARHTRQPIERIERDTERDYFMSAGEAKEYGLIDDVFLHKKAAEKKPQ.

Residue serine 100 is the Nucleophile of the active site. The active site involves histidine 125.

It belongs to the peptidase S14 family. In terms of assembly, fourteen ClpP subunits assemble into 2 heptameric rings which stack back to back to give a disk-like structure with a central cavity, resembling the structure of eukaryotic proteasomes.

The protein resides in the cytoplasm. It carries out the reaction Hydrolysis of proteins to small peptides in the presence of ATP and magnesium. alpha-casein is the usual test substrate. In the absence of ATP, only oligopeptides shorter than five residues are hydrolyzed (such as succinyl-Leu-Tyr-|-NHMec, and Leu-Tyr-Leu-|-Tyr-Trp, in which cleavage of the -Tyr-|-Leu- and -Tyr-|-Trp bonds also occurs).. Its function is as follows. Cleaves peptides in various proteins in a process that requires ATP hydrolysis. Has a chymotrypsin-like activity. Plays a major role in the degradation of misfolded proteins. The chain is ATP-dependent Clp protease proteolytic subunit from Anaeromyxobacter sp. (strain K).